A 110-amino-acid chain; its full sequence is ATP-dependent Clp protease adapter protein ClpS (110 aa).

Positions 1 to 10 (MSDDRRRGDE) are enriched in basic and acidic residues. Residues 1 to 27 (MSDDRRRGDEDGGAGTGVITKTKPKTK) form a disordered region.

This sequence belongs to the ClpS family. As to quaternary structure, binds to the N-terminal domain of the chaperone ClpA.

Involved in the modulation of the specificity of the ClpAP-mediated ATP-dependent protein degradation. In Parvibaculum lavamentivorans (strain DS-1 / DSM 13023 / NCIMB 13966), this protein is ATP-dependent Clp protease adapter protein ClpS.